Here is a 204-residue protein sequence, read N- to C-terminus: Recombination protein RecR (204 aa).

A C4-type zinc finger spans residues 58 to 75 (CSVCQNITDLGVDPCHIC). The Toprim domain occupies 83–181 (SVICVVESPT…NVTRIARGIP (99 aa)).

This sequence belongs to the RecR family.

Functionally, may play a role in DNA repair. It seems to be involved in an RecBC-independent recombinational process of DNA repair. It may act with RecF and RecO. This chain is Recombination protein RecR, found in Chlorobaculum tepidum (strain ATCC 49652 / DSM 12025 / NBRC 103806 / TLS) (Chlorobium tepidum).